A 335-amino-acid chain; its full sequence is Fructose-1,6-bisphosphatase class 1 (335 aa).

Positions 94, 113, 115, and 116 each coordinate Mg(2+). Substrate-binding positions include 116–119 (DGSS), Asn-208, and Lys-274. Residue Glu-280 coordinates Mg(2+).

This sequence belongs to the FBPase class 1 family. In terms of assembly, homotetramer. Mg(2+) is required as a cofactor.

The protein resides in the cytoplasm. The catalysed reaction is beta-D-fructose 1,6-bisphosphate + H2O = beta-D-fructose 6-phosphate + phosphate. It functions in the pathway carbohydrate biosynthesis; gluconeogenesis. This is Fructose-1,6-bisphosphatase class 1 from Polynucleobacter asymbioticus (strain DSM 18221 / CIP 109841 / QLW-P1DMWA-1) (Polynucleobacter necessarius subsp. asymbioticus).